The primary structure comprises 150 residues: Sulfur-rich protein, serovar D (150 aa).

2 consecutive transmembrane segments (helical) span residues 41-61 and 67-87; these read VGLV…LVSA and AIYL…VGIL.

Its subcellular location is the membrane. The protein is Sulfur-rich protein, serovar D (srp) of Chlamydia trachomatis serovar D (strain ATCC VR-885 / DSM 19411 / UW-3/Cx).